An 805-amino-acid polypeptide reads, in one-letter code: Nitrite reductase [NAD(P)H] (805 aa).

43-79 (YNRILLSKVLQGDTDIKDITLNDWDWYEENNIQLYTN) provides a ligand contact to FAD. An NADP(+)-binding site is contributed by 193–223 (LQNELEKQGMTFLLEKQTEEIVGDDRVEGLR). Positions 418, 420, 453, and 456 each coordinate [2Fe-2S] cluster. Residues C635, C641, C675, and C679 each coordinate [4Fe-4S] cluster. C679 contacts siroheme.

This sequence belongs to the nitrite and sulfite reductase 4Fe-4S domain family. As to quaternary structure, homodimer. Siroheme serves as cofactor. It depends on [2Fe-2S] cluster as a cofactor. [4Fe-4S] cluster is required as a cofactor. Requires FAD as cofactor.

The catalysed reaction is NH4(+) + 3 NADP(+) + 2 H2O = nitrite + 3 NADPH + 5 H(+). It carries out the reaction NH4(+) + 3 NAD(+) + 2 H2O = nitrite + 3 NADH + 5 H(+). Its pathway is nitrogen metabolism; nitrate reduction (assimilation). Functionally, required for nitrite assimilation. This Bacillus subtilis (strain 168) protein is Nitrite reductase [NAD(P)H] (nasD).